The following is a 395-amino-acid chain: MSDSSDGYAKPMTINFGPQHPAAHGVMRLILEMSGEVIERIDPHIGLLHRGTEKLIEYKTYLQALPYFDRLDYVSPMSQEHAYSLCVERLLGCEVPIRAKYLRVIFCELTRLLNHLLNVACQALDSGATTPLLWIFEEREKILSFYERASGARFHSAYIRPGGLAADVPDGLLDDIHEFTNYFPKLLDSVDDLLTENSIWKQRNVEIGKVTKQQALDWGFSGPMLRACGIPWDLRKSQPYEIYDILDFKVPVGSNGDCYDRYLVRMAEIRESLYILEQCLRDIPSGPVKTDDRKIAPPKREELKYSMEALIHHFKLFSEGYKVPEGEAYAAVEAPKGEFGVYIVSDGTNKPYRCRIRSPGFAHLQAIDAMARGHMLADLPVIIGSLDIVFGEIDR.

This sequence belongs to the complex I 49 kDa subunit family. NDH-1 is composed of 14 different subunits. Subunits NuoB, C, D, E, F, and G constitute the peripheral sector of the complex.

The protein resides in the cell inner membrane. The catalysed reaction is a quinone + NADH + 5 H(+)(in) = a quinol + NAD(+) + 4 H(+)(out). Functionally, NDH-1 shuttles electrons from NADH, via FMN and iron-sulfur (Fe-S) centers, to quinones in the respiratory chain. The immediate electron acceptor for the enzyme in this species is believed to be ubiquinone. Couples the redox reaction to proton translocation (for every two electrons transferred, four hydrogen ions are translocated across the cytoplasmic membrane), and thus conserves the redox energy in a proton gradient. This is NADH-quinone oxidoreductase subunit D from Anaplasma phagocytophilum (strain HZ).